The sequence spans 679 residues: MGKSRTKRFKRPQFSPIESCQAEAAAASNGTGDEEDDGPAAELLEKLQHPSAEVRECACAGLARLVQQRPALPDLARRDAVRRLGPLLLDSSLAVRETAAGALRNLSACGGFDVCDDMVAKDIMTPLVALLRECLSGLDSNEMSPQEKADKRNPVESIANEAVNVLWNVCECSGRAVSIFNKEGCLEIVLQYLRRFPTSIDLAVSVAYCLQTVTEDNPELLKSFDGTALRVLESALLCPVASMEYILLKTLVAGTIWNLKDIIPSKSQAEIINAILGALSEVLGMNTGNMVIQMKEAETQRLKTAAESEDILANANGDDLVEDDEMEEIPHKRKLRRKTFISDLLPPTDKELREAMALLTAQQTALEVIVNMCCSEDPSDDEWEELSSSDESEAFMENSFSECSGHLMSPLCLSHEIHSALTNCLIPEKVFEKTSSPNSVAVDICSKNPTWKPLIRKMNTIQCRALMCLQSLVSLLDIDHLGGAPALQTLAQHLSQILFSQPDFAKHDDFLEAISSALRALLQTMASKNIPQCMTPEQLMTLCREGIHSSSIGVRVNVVSILGITGSVLAKDDGTLDTLKTIGCFLLEVATKDPSLVVTGEALDALFDVFADGEAAEKASVQIKLLAALKEFQPVFKMKIRKEGRGKYSPDQLCVLDNVKMNLRRFIAYQETVEKRLTS.

Residues 1–11 are compositionally biased toward basic residues; it reads MGKSRTKRFKR. The tract at residues 1 to 40 is disordered; the sequence is MGKSRTKRFKRPQFSPIESCQAEAAAASNGTGDEEDDGPA. Ser15 carries the phosphoserine modification. HEAT repeat units lie at residues 38-69 and 74-110; these read GPAA…VQQR and DLAR…SACG. Ser144 carries the post-translational modification Phosphoserine. The residue at position 339 (Thr339) is a Phosphothreonine.

It belongs to the nuclear import and ribosome assembly adapter family. Component of a hexameric 5S RNP precursor complex, composed of 5S RNA, RRS1, RPF2/BXDC1, RPL5, RPL11 and HEATR3; this complex acts as a precursor for ribosome assembly.

Plays a role in ribosome biogenesis and in nuclear import of the 60S ribosomal protein L5/large ribosomal subunit protein uL18 (RPL5). Required for proper erythrocyte maturation. The protein is HEAT repeat-containing protein 3 (Heatr3) of Mus musculus (Mouse).